Consider the following 117-residue polypeptide: Galanin-like peptide (117 aa).

The signal sequence occupies residues 1–23 (MACSVHLVLFLTILLSLAETPES). The propeptide occupies 86-117 (TMGETFVKANTGDMHILDKNVPKEEATLDSES).

It belongs to the galanin family. Isoform 2 is found in brain, thymus and skin. Isoform 2 is found in the skin, in pericytes covering microvascular arterioles and venules on their abluminal surfaces. In larger vessels, isoform 2 is expressed in layers of smooth muscle cells. Isoform 2 is not detected in endothelial cells.

The protein resides in the secreted. Hypothalamic neuropeptide which binds to the G-protein-coupled galanin receptors (GALR1, GALR2 and GALR3). Involved in a large number of putative physiological functions in CNS homeostatic processes, including the regulation of gonadotropin-releasing hormone secretion. Functionally, exhibits antimicrobial activity against Gram-negative bacterias, inducing bacterial membrane blebbing. Exhibits potent and dose-dependent vasoconstrictor and anti-edema activity in the cutaneous microvasculature, a physiologic effects which does not appear to be mediated via GALR1 or GALR2. The polypeptide is Galanin-like peptide (Galp) (Mus musculus (Mouse)).